The chain runs to 182 residues: Early nodulin-like protein 14 (182 aa).

The N-terminal stretch at 1–28 (MFLSASMASSSLHVAIFSLIFLFSLAAA) is a signal peptide. The region spanning 29 to 133 (NEVTVGGKSG…GQKLSLVVIS (105 aa)) is the Phytocyanin domain. The cysteines at positions 87 and 121 are disulfide-linked. Asn88 and Asn95 each carry an N-linked (GlcNAc...) asparagine glycan. The GPI-anchor amidated serine moiety is linked to residue Ser160. A propeptide spans 161-182 (GSVRLGGCYVVLGLVLGLCAWF) (removed in mature form).

It belongs to the early nodulin-like (ENODL) family. As to quaternary structure, interacts strongly and specifically with the extracellular domain of FERONIA at the synergid cell surface. As to expression, mostly expressed in seedlings and flowers, and, to a lower extent, in roots, stems and seeds, but barely in leaves.

It localises to the cell membrane. In terms of biological role, may act as a carbohydrate transporter. Required, together with ENODL11, ENODL12, ENODL13, ENODL14 and ENODL15, for male-female communication and pollen tube reception and burst at the synergid cell surface of the female gametophyte. In Arabidopsis thaliana (Mouse-ear cress), this protein is Early nodulin-like protein 14.